A 333-amino-acid polypeptide reads, in one-letter code: Cell shape-determining protein Mbl (333 aa).

ATP-binding positions include 12–14, 156–158, 204–207, and 284–287; these read TAN, GGT, EDIK, and GGAL.

The protein belongs to the FtsA/MreB family. Forms polymers.

Its subcellular location is the cytoplasm. Functionally, forms membrane-associated dynamic filaments that are essential for cell shape determination. Acts by regulating cell wall synthesis and cell elongation, and thus cell shape. A feedback loop between cell geometry and Mbl localization may maintain elongated cell shape by targeting cell wall growth to regions of negative cell wall curvature. The protein is Cell shape-determining protein Mbl of Bacillus cereus (strain ATCC 10987 / NRS 248).